Here is a 434-residue protein sequence, read N- to C-terminus: ATP-dependent protease ATPase subunit HslU (434 aa).

Residues valine 18, 60–65 (GVGKTE), aspartate 247, glutamate 312, and arginine 384 contribute to the ATP site.

It belongs to the ClpX chaperone family. HslU subfamily. As to quaternary structure, a double ring-shaped homohexamer of HslV is capped on each side by a ring-shaped HslU homohexamer. The assembly of the HslU/HslV complex is dependent on binding of ATP.

The protein localises to the cytoplasm. Functionally, ATPase subunit of a proteasome-like degradation complex; this subunit has chaperone activity. The binding of ATP and its subsequent hydrolysis by HslU are essential for unfolding of protein substrates subsequently hydrolyzed by HslV. HslU recognizes the N-terminal part of its protein substrates and unfolds these before they are guided to HslV for hydrolysis. This is ATP-dependent protease ATPase subunit HslU from Hyphomonas neptunium (strain ATCC 15444).